A 172-amino-acid polypeptide reads, in one-letter code: Shikimate kinase (172 aa).

Residue 14–19 participates in ATP binding; sequence GAGKST. S18 contacts Mg(2+). Substrate is bound by residues D36, R60, and G82. Residue R120 participates in ATP binding. A substrate-binding site is contributed by R139. An ATP-binding site is contributed by Q156.

It belongs to the shikimate kinase family. In terms of assembly, monomer. Mg(2+) is required as a cofactor.

Its subcellular location is the cytoplasm. It carries out the reaction shikimate + ATP = 3-phosphoshikimate + ADP + H(+). It participates in metabolic intermediate biosynthesis; chorismate biosynthesis; chorismate from D-erythrose 4-phosphate and phosphoenolpyruvate: step 5/7. Catalyzes the specific phosphorylation of the 3-hydroxyl group of shikimic acid using ATP as a cosubstrate. This chain is Shikimate kinase, found in Vibrio campbellii (strain ATCC BAA-1116).